Here is an 82-residue protein sequence, read N- to C-terminus: UPF0154 protein SMU_1719c (82 aa).

A helical transmembrane segment spans residues 4–24; the sequence is FLWILLVIIALLAGLVGGTFI.

Belongs to the UPF0154 family.

It localises to the membrane. The protein is UPF0154 protein SMU_1719c of Streptococcus mutans serotype c (strain ATCC 700610 / UA159).